The primary structure comprises 334 residues: UDP-N-acetylglucosamine--N-acetylmuramyl-(pentapeptide) pyrophosphoryl-undecaprenol N-acetylglucosamine transferase (334 aa).

Residues 11-13, asparagine 125, serine 185, isoleucine 229, and glutamine 274 contribute to the UDP-N-acetyl-alpha-D-glucosamine site; that span reads TGG.

This sequence belongs to the glycosyltransferase 28 family. MurG subfamily.

Its subcellular location is the cell inner membrane. It carries out the reaction di-trans,octa-cis-undecaprenyl diphospho-N-acetyl-alpha-D-muramoyl-L-alanyl-D-glutamyl-meso-2,6-diaminopimeloyl-D-alanyl-D-alanine + UDP-N-acetyl-alpha-D-glucosamine = di-trans,octa-cis-undecaprenyl diphospho-[N-acetyl-alpha-D-glucosaminyl-(1-&gt;4)]-N-acetyl-alpha-D-muramoyl-L-alanyl-D-glutamyl-meso-2,6-diaminopimeloyl-D-alanyl-D-alanine + UDP + H(+). Its pathway is cell wall biogenesis; peptidoglycan biosynthesis. In terms of biological role, cell wall formation. Catalyzes the transfer of a GlcNAc subunit on undecaprenyl-pyrophosphoryl-MurNAc-pentapeptide (lipid intermediate I) to form undecaprenyl-pyrophosphoryl-MurNAc-(pentapeptide)GlcNAc (lipid intermediate II). The polypeptide is UDP-N-acetylglucosamine--N-acetylmuramyl-(pentapeptide) pyrophosphoryl-undecaprenol N-acetylglucosamine transferase (Thermosipho melanesiensis (strain DSM 12029 / CIP 104789 / BI429)).